We begin with the raw amino-acid sequence, 358 residues long: Peptide chain release factor 1 (358 aa).

N5-methylglutamine is present on glutamine 233.

This sequence belongs to the prokaryotic/mitochondrial release factor family. In terms of processing, methylated by PrmC. Methylation increases the termination efficiency of RF1.

The protein resides in the cytoplasm. Peptide chain release factor 1 directs the termination of translation in response to the peptide chain termination codons UAG and UAA. The chain is Peptide chain release factor 1 from Staphylococcus saprophyticus subsp. saprophyticus (strain ATCC 15305 / DSM 20229 / NCIMB 8711 / NCTC 7292 / S-41).